An 88-amino-acid polypeptide reads, in one-letter code: Small ribosomal subunit protein uS15c (88 aa).

The protein belongs to the universal ribosomal protein uS15 family. In terms of assembly, part of the 30S ribosomal subunit.

It is found in the plastid. It localises to the chloroplast. This chain is Small ribosomal subunit protein uS15c (rps15), found in Calycanthus floridus var. glaucus (Eastern sweetshrub).